The primary structure comprises 372 residues: Dof zinc finger protein DOF5.6 (372 aa).

Residues 73–127 (QKCPRCESTHTKFCYYNNYSLSQPRYFCKTCRRYWTKGGTLRNIPVGGGCRKNKK) form a Dof-type zinc finger. The Zn(2+) site is built by C75, C78, C100, and C103. Positions 117 to 146 (PVGGGCRKNKKPSSSNSSSSTSSGKKPSNI) are disordered. The segment covering 128–145 (PSSSNSSSSTSSGKKPSN) has biased composition (low complexity).

In terms of tissue distribution, the PEAR proteins (e.g. DOF2.4, DOF5.1, DOF3.2, DOF1.1, DOF5.6 and DOF5.3) form a short-range concentration gradient that peaks at protophloem sieve elements (PSE). Preferentially expressed in the vasculature of all organs, including seedlings, roots, stems, buds, leaves, flowers and siliques, and particularly in the cambium, phloem and interfascicular parenchyma cells of inflorescence stems.

It localises to the nucleus. Transcription factor that binds specifically to a 5'-AA[AG]G-3' consensus core sequence. Promotes expression. The PEAR proteins (e.g. DOF2.4, DOF5.1, DOF3.2, DOF1.1, DOF5.6 and DOF5.3) activate gene expression that promotes radial growth of protophloem sieve elements. Involved in the regulation of interfascicular cambium formation and vascular tissue development, particularly at a very early stage during inflorescence stem development; promotes both cambium activity and phloem specification, but prevents xylem specification. The chain is Dof zinc finger protein DOF5.6 from Arabidopsis thaliana (Mouse-ear cress).